A 152-amino-acid chain; its full sequence is Superoxide dismutase [Cu-Zn] 5 (152 aa).

Residues histidine 44, histidine 46, and histidine 61 each coordinate Cu cation. A disulfide bridge links cysteine 55 with cysteine 144. Residues histidine 61, histidine 69, histidine 78, and aspartate 81 each contribute to the Zn(2+) site. Histidine 118 is a Cu cation binding site.

Belongs to the Cu-Zn superoxide dismutase family. It depends on Cu cation as a cofactor. The cofactor is Zn(2+).

The catalysed reaction is 2 superoxide + 2 H(+) = H2O2 + O2. Destroys radicals which are normally produced within the cells and which are toxic to biological systems. The sequence is that of Superoxide dismutase [Cu-Zn] 5 (sodE) from Dictyostelium discoideum (Social amoeba).